Consider the following 111-residue polypeptide: MEAKAIGKTIRIAPRKVRLVVDLIRGKNVKEAQAILMFTPRGASPVIAKVLDSAIANATHNLNLNPENLFVKEVWANESITMKRMLPRAKGSGHLIRKRTSHITVVVAERE.

This sequence belongs to the universal ribosomal protein uL22 family. In terms of assembly, part of the 50S ribosomal subunit.

This protein binds specifically to 23S rRNA; its binding is stimulated by other ribosomal proteins, e.g. L4, L17, and L20. It is important during the early stages of 50S assembly. It makes multiple contacts with different domains of the 23S rRNA in the assembled 50S subunit and ribosome. Its function is as follows. The globular domain of the protein is located near the polypeptide exit tunnel on the outside of the subunit, while an extended beta-hairpin is found that lines the wall of the exit tunnel in the center of the 70S ribosome. This chain is Large ribosomal subunit protein uL22, found in Acholeplasma laidlawii (strain PG-8A).